The chain runs to 294 residues: MKNPCNVIAIIGKPRDQQAIQTHKELYEWLTSEGYKVFIDDRLAAILDEIPQNHFASLVELGKNADLAIVVGGDGNMLGAARILSRFDVPVIGVNRGNLGFLTDLNPDDFQAALKAVLAGEYIEEERFLLEAEVHRHGQIKSHNAALNEAVLHPGQIAHMIEFEVYIDESFAFSLRADGLIVSTPTGSTAYSLSGGGPILSPSLNAISLVPMFPHTLSSRPLVVDGKRRIKLIVSPENRGTQEVSCDGQVSLPVSPGDEIHIYQSPNVLKLIHPKDYSYYHVLRNKLGWSSKLF.

Asp74 functions as the Proton acceptor in the catalytic mechanism. Residues Asp74–Gly75, Asn148–Glu149, His159, Arg176, Asp178, Thr189–Ser194, and Gln249 contribute to the NAD(+) site.

It belongs to the NAD kinase family. The cofactor is a divalent metal cation.

It localises to the cytoplasm. The catalysed reaction is NAD(+) + ATP = ADP + NADP(+) + H(+). Functionally, involved in the regulation of the intracellular balance of NAD and NADP, and is a key enzyme in the biosynthesis of NADP. Catalyzes specifically the phosphorylation on 2'-hydroxyl of the adenosine moiety of NAD to yield NADP. The chain is NAD kinase from Vibrio parahaemolyticus serotype O3:K6 (strain RIMD 2210633).